A 495-amino-acid chain; its full sequence is Aspartyl/glutamyl-tRNA(Asn/Gln) amidotransferase subunit B (495 aa).

The protein belongs to the GatB/GatE family. GatB subfamily. In terms of assembly, heterotrimer of A, B and C subunits.

The enzyme catalyses L-glutamyl-tRNA(Gln) + L-glutamine + ATP + H2O = L-glutaminyl-tRNA(Gln) + L-glutamate + ADP + phosphate + H(+). It carries out the reaction L-aspartyl-tRNA(Asn) + L-glutamine + ATP + H2O = L-asparaginyl-tRNA(Asn) + L-glutamate + ADP + phosphate + 2 H(+). Functionally, allows the formation of correctly charged Asn-tRNA(Asn) or Gln-tRNA(Gln) through the transamidation of misacylated Asp-tRNA(Asn) or Glu-tRNA(Gln) in organisms which lack either or both of asparaginyl-tRNA or glutaminyl-tRNA synthetases. The reaction takes place in the presence of glutamine and ATP through an activated phospho-Asp-tRNA(Asn) or phospho-Glu-tRNA(Gln). The protein is Aspartyl/glutamyl-tRNA(Asn/Gln) amidotransferase subunit B of Prochlorococcus marinus (strain MIT 9313).